A 430-amino-acid chain; its full sequence is tRNA(Ile)-lysidine synthase (430 aa).

21 to 26 serves as a coordination point for ATP; that stretch reads SGGLDS.

This sequence belongs to the tRNA(Ile)-lysidine synthase family.

The protein resides in the cytoplasm. It catalyses the reaction cytidine(34) in tRNA(Ile2) + L-lysine + ATP = lysidine(34) in tRNA(Ile2) + AMP + diphosphate + H(+). Ligates lysine onto the cytidine present at position 34 of the AUA codon-specific tRNA(Ile) that contains the anticodon CAU, in an ATP-dependent manner. Cytidine is converted to lysidine, thus changing the amino acid specificity of the tRNA from methionine to isoleucine. This is tRNA(Ile)-lysidine synthase from Salmonella schwarzengrund (strain CVM19633).